The primary structure comprises 21 residues: 40 kDa major outer membrane protein (21 aa).

Disulfide bond interactions within and between MOMP molecules and other components form high molecular-weight oligomers.

Its subcellular location is the cell outer membrane. In terms of biological role, structural rigidity of the outer membrane of elementary bodies and porin forming, permitting diffusion of solutes through the intracellular reticulate body membrane. This Actinobacillus pleuropneumoniae (Haemophilus pleuropneumoniae) protein is 40 kDa major outer membrane protein.